The sequence spans 389 residues: MLLALAQWLQGDASFLRLFTYLTFRAVMATITALVIGLVCGPWVIRKLTQMKVGQAVRKDGPQTHLVKSGTPTMGGVLILIGIAVATLLWGDLTNRFIWIVMLVTFGFGVIGWVDDYRKVVYKDPRGMSSREKYFWQSVIGLFAAVYLAFSVSEANNVRVFDLFMAWVRSGLSMGLPARADLMLPFLKSISYPLGVWGFIALTYFVIVGASNAVNLTDGLDGLVIMPVVLVGASLGVFAYVMGSAVYSKYLLFPHIPGAGELLIFCSAMGGAGLAFLWYNTHPAQVFMGDVGALALGGALGTVAVIVRQEIVLFIMGGIFVAETLSVMLQVTWFKYTKRRYGEGRRIFKMAPLHHHFELSGWKETQVVVRFWIITLMLCLFGLSTLKLR.

10 helical membrane-spanning segments follow: residues 25–45 (RAVM…PWVI), 73–93 (TMGG…WGDL), 97–117 (FIWI…VDDY), 135–155 (FWQS…VSEA), 190–210 (ISYP…IVGA), 222–242 (GLVI…AYVM), 258–278 (GAGE…AFLW), 286–306 (VFMG…VAVI), 311–331 (IVLF…MLQV), and 366–386 (QVVV…LSTL).

It belongs to the glycosyltransferase 4 family. MraY subfamily. The cofactor is Mg(2+).

The protein resides in the cell inner membrane. The catalysed reaction is UDP-N-acetyl-alpha-D-muramoyl-L-alanyl-gamma-D-glutamyl-meso-2,6-diaminopimeloyl-D-alanyl-D-alanine + di-trans,octa-cis-undecaprenyl phosphate = di-trans,octa-cis-undecaprenyl diphospho-N-acetyl-alpha-D-muramoyl-L-alanyl-D-glutamyl-meso-2,6-diaminopimeloyl-D-alanyl-D-alanine + UMP. The protein operates within cell wall biogenesis; peptidoglycan biosynthesis. Catalyzes the initial step of the lipid cycle reactions in the biosynthesis of the cell wall peptidoglycan: transfers peptidoglycan precursor phospho-MurNAc-pentapeptide from UDP-MurNAc-pentapeptide onto the lipid carrier undecaprenyl phosphate, yielding undecaprenyl-pyrophosphoryl-MurNAc-pentapeptide, known as lipid I. This Burkholderia pseudomallei (strain 1106a) protein is Phospho-N-acetylmuramoyl-pentapeptide-transferase.